A 419-amino-acid chain; its full sequence is Serine hydroxymethyltransferase (419 aa).

(6S)-5,6,7,8-tetrahydrofolate-binding positions include Leu121 and 125–127 (GHL). N6-(pyridoxal phosphate)lysine is present on Lys229. 354-356 (SPF) contributes to the (6S)-5,6,7,8-tetrahydrofolate binding site.

Belongs to the SHMT family. In terms of assembly, homodimer. Pyridoxal 5'-phosphate is required as a cofactor.

It localises to the cytoplasm. The catalysed reaction is (6R)-5,10-methylene-5,6,7,8-tetrahydrofolate + glycine + H2O = (6S)-5,6,7,8-tetrahydrofolate + L-serine. Its pathway is one-carbon metabolism; tetrahydrofolate interconversion. The protein operates within amino-acid biosynthesis; glycine biosynthesis; glycine from L-serine: step 1/1. Catalyzes the reversible interconversion of serine and glycine with tetrahydrofolate (THF) serving as the one-carbon carrier. This reaction serves as the major source of one-carbon groups required for the biosynthesis of purines, thymidylate, methionine, and other important biomolecules. Also exhibits THF-independent aldolase activity toward beta-hydroxyamino acids, producing glycine and aldehydes, via a retro-aldol mechanism. The chain is Serine hydroxymethyltransferase from Coxiella burnetii (strain RSA 331 / Henzerling II).